Consider the following 707-residue polypeptide: Early transcription factor 82 kDa subunit (707 aa).

Belongs to the poxviridae VETF large subunit family. In terms of assembly, heterodimer of a 70 kDa and a 82 kDa subunit. Part of the early transcription complex composed of ETF, RAP94, and the DNA-directed RNA polymerase.

The protein localises to the virion. Acts with RNA polymerase to initiate transcription from early gene promoters. Is recruited by the RPO-associated protein of 94 kDa (RAP94) to form the early transcription complex, which also contains the core RNA polymerase. ETF heterodimer binds to early gene promoters. The sequence is that of Early transcription factor 82 kDa subunit (VETFL) from Molluscum contagiosum virus subtype 1 (MOCV).